The primary structure comprises 420 residues: UDP-N-acetylmuramoylalanine--D-glutamate ligase (420 aa).

Residue 109–115 (GSVGKST) coordinates ATP.

Belongs to the MurCDEF family.

The protein resides in the cytoplasm. The catalysed reaction is UDP-N-acetyl-alpha-D-muramoyl-L-alanine + D-glutamate + ATP = UDP-N-acetyl-alpha-D-muramoyl-L-alanyl-D-glutamate + ADP + phosphate + H(+). It functions in the pathway cell wall biogenesis; peptidoglycan biosynthesis. Its function is as follows. Cell wall formation. Catalyzes the addition of glutamate to the nucleotide precursor UDP-N-acetylmuramoyl-L-alanine (UMA). In Fervidobacterium nodosum (strain ATCC 35602 / DSM 5306 / Rt17-B1), this protein is UDP-N-acetylmuramoylalanine--D-glutamate ligase.